The primary structure comprises 294 residues: 2-dehydro-3-deoxy-phosphogluconate/2-dehydro-3-deoxy-6-phosphogalactonate aldolase (294 aa).

Substrate-binding positions include 43-44, 130-132, and 155-157; these read TT, YNY, and KDT. Lys155 serves as the catalytic Schiff-base intermediate with substrate.

It belongs to the DapA family. KDPG aldolase subfamily. Homotetramer; dimer of dimers.

It catalyses the reaction 2-dehydro-3-deoxy-6-phospho-D-gluconate = D-glyceraldehyde 3-phosphate + pyruvate. It carries out the reaction 2-dehydro-3-deoxy-6-phospho-D-galactonate = D-glyceraldehyde 3-phosphate + pyruvate. Its pathway is carbohydrate acid metabolism; 2-dehydro-3-deoxy-D-gluconate degradation; D-glyceraldehyde 3-phosphate and pyruvate from 2-dehydro-3-deoxy-D-gluconate: step 2/2. Functionally, involved in the degradation of glucose and galactose via the Entner-Doudoroff pathway. Catalyzes the reversible cleavage of 2-keto-3-deoxy-6-phosphogluconate (KDPG) and 2-keto-3-deoxygluconate (KDG) forming pyruvate and glyceraldehyde 3-phosphate or glyceraldehyde, respectively. It is also able to catalyze the reversible cleavage of 2-keto-3-deoxy-6-phosphogalactonate (KDPGal) and 2-keto-3-deoxygalactonate (KDGal). It is equally active with both D- and L-glyceraldehyde. The polypeptide is 2-dehydro-3-deoxy-phosphogluconate/2-dehydro-3-deoxy-6-phosphogalactonate aldolase (Saccharolobus solfataricus (Sulfolobus solfataricus)).